The chain runs to 1551 residues: MAVYSAVAWILLFGVLASLGAQNPVSWEVQRFDGWYNNLMEHRWGSKGSRLQRLVPASYADGVYQPLREPYLPNPRHLSNRVMRGPAGQPSLRNRTVLGVFFGYHVLSDLVSVETPGCPAEFLNIYIPRGDPVFDPDKRGNVVLPFQRSRWDRSTGQSPSNPRDLTNQVTGWLDGSAIYGSSHSWSDTLRSFSGGQLASGPDPAFPRNSQNSLLMWMAPDPATGQGGPQGLYAFGAQRGNREPFLQALGLLWFRYHNLCAKRLAQEHPHWGDEELFQHARKRVIATYQNIAMYEWLPSFLKQTPPEYPGYHPFLDPSISPEFVVASEQFLSTMVPPGVYMRNASCHFQGIANRNSSVSGALRVCNSYWSRENPKLQRAEDVDALLLGMASQIAEREDHLVVEDVQDFWPGPLKFSRTDYLASCLQRGRDLGLPSYTKAREALGLPPVSHWQDINPALSRSNGTVLEATAALYNQDLSRLELLAGGLLESHGDPGPLFSAIVLDQFVRLRDGDRYWFENNRNGLFSKEEIAEIRNTSLRDILVAVTNVDPSALQPSVFFWLAGDPCPQPSQLSTQGLPACAPLFVRDYFKGSGFGFGLTIGTLCCFPLVSLLSAWIVARLRMRNFKRLQRQDRQSIMCEKLVGGVEALEWQGRKEPCRPVLVHLQPGQIRVVDGRLTVLRTIQLRPPQQVNLILSSNRGRRTLLLKIPKEYDLVLLFNMEEERQALVENIRAALKENGLSFQEWELREQELMRAAVTRQQRGHLLETFFRHLFSQVLDINQADAGTLPLDSSTKVREALTCELSRAEFADSLGLKPQDMFVESMFSLADKDGNGYLSFREFLDILVVFMKGSPEEKSRLMFRMYDFDGNGLISKDEFIRMLRSFIEISNNCLSKDQLAEVVESMFRESGFQDKEELTWEDFHFMLRDHDSDLRFTQLCVKGVEVPEVIKNLCRRASYISQEKICPSPRMSAHCARNNTKTASSPQRLQCPVDTDPPQEIRRRFGKKVTSFQPLLFTEAHREKFQRSRRHQTVQQFKRFIENYRRHIGCVAVFYTITGALFLERAYYYAFAAHHSGITDTTRVGIILSRGTAASISFMFSYILLTMCRNLITFLRETFLNRYIPFDAAVDFHRFIASTAIILTVLHSAGHVVNVYLFSISPLSVLSCLFPDLFHDDGSEFPQKYYWWFFQTVPGLTGVLLLLALAIMYVFASHHFRRRSFRGFWLTHHLYIFLYILLIIHGSFALIQMPRFHIFFLVPAIIYVGDKLVSLSRKKVEISVVKAELLPSGVTHLRFQRPQGFEYKSGQWVRIACLALGTTEYHPFTLTSAPHEDTLSLHIRAAGPWTTRLREIYSPPTGDTCARYPKLYLDGPFGEGHQEWHKFEVSVLVGAGIGVTPFASILKDLVFKSSVSCQVFCKKIYFIWVTRTQRQFEWLADIIREVEENDSRDLVSVHIYITQLAEKFDLRTTMLYICERHFQKVLNRSLFTGLRSVTHFGRPPFEPFFNSLQEVHPQVRKIGVFSCGPPGMTKNVEKACQLINKQDRTHFSHHYENF.

A signal peptide spans 1 to 21 (MAVYSAVAWILLFGVLASLGA). The Extracellular portion of the chain corresponds to 22-596 (QNPVSWEVQR…YFKGSGFGFG (575 aa)). The segment at 26–593 (SWEVQRFDGW…VRDYFKGSGF (568 aa)) is peroxidase-like; mediates peroxidase activity. N-linked (GlcNAc...) asparagine glycosylation is found at Asn94, Asn342, Asn354, Asn461, and Asn534. The chain crosses the membrane as a helical span at residues 597–617 (LTIGTLCCFPLVSLLSAWIVA). Residues 618–1044 (RLRMRNFKRL…KRFIENYRRH (427 aa)) are Cytoplasmic-facing. EF-hand domains are found at residues 815 to 850 (PQDM…FMKG), 851 to 886 (SPEE…FIEI), and 895 to 930 (QLAE…HDSD). Positions 828, 830, 832, 834, 839, 864, 866, 868, and 875 each coordinate Ca(2+). An interaction with TXNDC11 region spans residues 956 to 1248 (YISQEKICPS…GSFALIQMPR (293 aa)). Residues 1045–1065 (IGCVAVFYTITGALFLERAYY) form a helical membrane-spanning segment. The Extracellular portion of the chain corresponds to 1066–1080 (YAFAAHHSGITDTTR). Residues 1081-1101 (VGIILSRGTAASISFMFSYIL) form a helical membrane-spanning segment. A Ferric oxidoreductase domain is found at 1087-1269 (RGTAASISFM…YVGDKLVSLS (183 aa)). At 1102 to 1136 (LTMCRNLITFLRETFLNRYIPFDAAVDFHRFIAST) the chain is on the cytoplasmic side. The chain crosses the membrane as a helical span at residues 1137 to 1157 (AIILTVLHSAGHVVNVYLFSI). Residues 1158-1188 (SPLSVLSCLFPDLFHDDGSEFPQKYYWWFFQ) lie on the Extracellular side of the membrane. A helical transmembrane segment spans residues 1189-1209 (TVPGLTGVLLLLALAIMYVFA). Residues 1210 to 1226 (SHHFRRRSFRGFWLTHH) are Cytoplasmic-facing. A helical membrane pass occupies residues 1227–1247 (LYIFLYILLIIHGSFALIQMP). Residue Arg1248 is a topological domain, extracellular. Residues 1249 to 1269 (FHIFFLVPAIIYVGDKLVSLS) form a helical membrane-spanning segment. Residues 1270–1376 (RKKVEISVVK…DGPFGEGHQE (107 aa)) form the FAD-binding FR-type domain. Residues 1270-1551 (RKKVEISVVK…THFSHHYENF (282 aa)) are Cytoplasmic-facing.

It in the N-terminal section; belongs to the peroxidase family. Interacts with TXNDC11, TPO and CYBA. In terms of processing, N-glycosylated. In terms of tissue distribution, expressed in thyrocytes (at protein level).

It is found in the apical cell membrane. It catalyses the reaction NADH + O2 + H(+) = H2O2 + NAD(+). The catalysed reaction is NADPH + O2 + H(+) = H2O2 + NADP(+). It functions in the pathway hormone biosynthesis; thyroid hormone biosynthesis. Its activity is regulated as follows. The NADPH oxidase activity is calcium-dependent. Peroxidase activity is inhibited by aminobenzohydrazide. Generates hydrogen peroxide which is required for the activity of thyroid peroxidase/TPO and lactoperoxidase/LPO. Plays a role in thyroid hormones synthesis and lactoperoxidase-mediated antimicrobial defense at the surface of mucosa. May have its own peroxidase activity through its N-terminal peroxidase-like domain. This Rattus norvegicus (Rat) protein is Dual oxidase 1 (Duox1).